Here is a 430-residue protein sequence, read N- to C-terminus: Drebrin-like protein (430 aa).

The region spanning 4-133 (NLSRNGPALQ…EPECIMEKVA (130 aa)) is the ADF-H domain. Position 26 is a phosphothreonine (threonine 26). 2 positions are modified to phosphoserine: glycine 137 and serine 160. Lysine 176 carries the N6-acetyllysine modification. Residues 176–231 (KDSFWAKAEKEEENRRLEEKRRAEEAQRQLEQERRERELREAARREQRYQEQGGEA) are a coiled coil. Phosphoserine is present on residues alanine 183 and serine 232. The segment at 219–283 (RREQRYQEQG…SSPQPGKLRS (65 aa)) is disordered. The segment covering 233–244 (PQRTWEQQQEVV) has biased composition (polar residues). The span at 245 to 267 (SRNRNEQESAVHPREIFKQKERA) shows a compositional bias: basic and acidic residues. Positions 268-277 (MSTTSISSPQ) are enriched in polar residues. 4 positions are modified to phosphoserine: serine 269, serine 272, serine 275, and serine 283. Position 288 is an N6-acetyllysine (lysine 288). Phosphothreonine is present on threonine 291. Residues tyrosine 334 and tyrosine 344 each carry the phosphotyrosine modification. The 60-residue stretch at 371 to 430 (GQGLCARALYDYQAADDTEISFDPENLITGIEVIDEGWWRGYGPDGHFGMFPANYVELIE) folds into the SH3 domain.

This sequence belongs to the ABP1 family. Interacts with SHANK2, SHANK3 and SYN1. Interacts with FGD1 and DNM1. Interacts with ANKRD54. Interacts with COBL. Interacts with WASL and WIPF1. Interacts with MAP4K1 and PRAM1. In terms of processing, degraded by caspases during apoptosis.

Its subcellular location is the cytoplasm. It is found in the cytoskeleton. It localises to the cell projection. The protein localises to the lamellipodium. The protein resides in the ruffle. Its subcellular location is the cell cortex. It is found in the cytosol. It localises to the synapse. The protein localises to the perikaryon. The protein resides in the neuron projection. Its subcellular location is the cell membrane. It is found in the cytoplasmic vesicle. It localises to the clathrin-coated vesicle membrane. The protein localises to the golgi apparatus membrane. The protein resides in the podosome. Its subcellular location is the early endosome. It is found in the dendrite. It localises to the postsynaptic density. Functionally, adapter protein that binds F-actin and DNM1, and thereby plays a role in receptor-mediated endocytosis. Plays a role in the reorganization of the actin cytoskeleton, formation of cell projections, such as neurites, in neuron morphogenesis and synapse formation via its interaction with WASL and COBL. Does not bind G-actin and promote actin polymerization by itself. Required for the formation of organized podosome rosettes. May act as a common effector of antigen receptor-signaling pathways in leukocytes. Acts as a key component of the immunological synapse that regulates T-cell activation by bridging TCRs and the actin cytoskeleton to gene activation and endocytic processes. The chain is Drebrin-like protein (DBNL) from Homo sapiens (Human).